The following is a 429-amino-acid chain: N5-carboxyaminoimidazole ribonucleotide synthase (429 aa).

Residues lysine 117, lysine 157, 194 to 197 (EERV), glutamate 202, and 280 to 281 (NE) contribute to the ATP site. The ATP-grasp domain occupies 121–310 (RQRLAAAGVA…QFEQHLRAVL (190 aa)). The segment at 406–429 (RASDDAVGVPPACGGRSDEEERRL) is disordered.

The protein belongs to the PurK/PurT family. In terms of assembly, homodimer.

The enzyme catalyses 5-amino-1-(5-phospho-beta-D-ribosyl)imidazole + hydrogencarbonate + ATP = 5-carboxyamino-1-(5-phospho-D-ribosyl)imidazole + ADP + phosphate + 2 H(+). It functions in the pathway purine metabolism; IMP biosynthesis via de novo pathway; 5-amino-1-(5-phospho-D-ribosyl)imidazole-4-carboxylate from 5-amino-1-(5-phospho-D-ribosyl)imidazole (N5-CAIR route): step 1/2. In terms of biological role, catalyzes the ATP-dependent conversion of 5-aminoimidazole ribonucleotide (AIR) and HCO(3)(-) to N5-carboxyaminoimidazole ribonucleotide (N5-CAIR). This chain is N5-carboxyaminoimidazole ribonucleotide synthase, found in Mycobacterium bovis (strain ATCC BAA-935 / AF2122/97).